The chain runs to 420 residues: Enolase (420 aa).

A (2R)-2-phosphoglycerate-binding site is contributed by glutamine 162. The active-site Proton donor is glutamate 206. Mg(2+) is bound by residues aspartate 241, glutamate 282, and aspartate 308. (2R)-2-phosphoglycerate-binding residues include lysine 333, arginine 362, serine 363, and lysine 384. Lysine 333 (proton acceptor) is an active-site residue.

It belongs to the enolase family. It depends on Mg(2+) as a cofactor.

It localises to the cytoplasm. Its subcellular location is the secreted. The protein localises to the cell surface. It catalyses the reaction (2R)-2-phosphoglycerate = phosphoenolpyruvate + H2O. It participates in carbohydrate degradation; glycolysis; pyruvate from D-glyceraldehyde 3-phosphate: step 4/5. Its function is as follows. Catalyzes the reversible conversion of 2-phosphoglycerate (2-PG) into phosphoenolpyruvate (PEP). It is essential for the degradation of carbohydrates via glycolysis. This chain is Enolase, found in Methanothrix thermoacetophila (strain DSM 6194 / JCM 14653 / NBRC 101360 / PT) (Methanosaeta thermophila).